The chain runs to 134 residues: Small ribosomal subunit protein bS16 (134 aa).

Positions 105-134 are disordered; the sequence is QNERREKRLAIKTRRRQAKKAAEAEGQESA. Residues 114–123 are compositionally biased toward basic residues; it reads AIKTRRRQAK.

The protein belongs to the bacterial ribosomal protein bS16 family.

This is Small ribosomal subunit protein bS16 from Chlorobium phaeobacteroides (strain BS1).